The primary structure comprises 468 residues: RuvB-like helicase 2 (468 aa).

76–83 (GPPSTGKT) contributes to the ATP binding site.

Belongs to the RuvB family. In terms of assembly, may form heterododecamers with RVB1. Component of the SWR1 chromatin remodeling complex, the INO80 chromatin remodeling complex, and of the R2TP complex.

The protein localises to the nucleus. It catalyses the reaction ATP + H2O = ADP + phosphate + H(+). DNA helicase which participates in several chromatin remodeling complexes, including the SWR1 and the INO80 complexes. The SWR1 complex mediates the ATP-dependent exchange of histone H2A for the H2A variant HZT1 leading to transcriptional regulation of selected genes by chromatin remodeling. The INO80 complex remodels chromatin by shifting nucleosomes and is involved in DNA repair. Also involved in pre-rRNA processing. In Emericella nidulans (strain FGSC A4 / ATCC 38163 / CBS 112.46 / NRRL 194 / M139) (Aspergillus nidulans), this protein is RuvB-like helicase 2 (rvb2).